The following is a 342-amino-acid chain: Platelet-activating factor receptor (342 aa).

Residues 1–16 (MEPNNSFRVDSEFRYT) are Extracellular-facing. A glycan (N-linked (GlcNAc...) asparagine) is linked at Asn-4. A helical transmembrane segment spans residues 17-38 (LFPIFYSIVFVLGVIANSYVLW). Topologically, residues 39–54 (VFARLYPSKKFNEIKI) are cytoplasmic. A helical transmembrane segment spans residues 55-74 (FMVNLTMADLLFLVTLPLWI). Residues 75–91 (VYYYNQGDWILPKFLCN) lie on the Extracellular side of the membrane. Cys-90 and Cys-173 are oxidised to a cystine. Residues 92–113 (LAGCFFFINTYCSVAFLAVITY) traverse the membrane as a helical segment. The Cytoplasmic portion of the chain corresponds to 114 to 133 (NRFQAVTRPIKTAQATTRKR). Residues 134 to 155 (GILLSLIIWVSIVGAASYFFVL) traverse the membrane as a helical segment. The Extracellular segment spans residues 156-184 (DSTNREPNKTGSANITRCFEHYEKGSIPV). Residues Asn-163 and Asn-169 are each glycosylated (N-linked (GlcNAc...) asparagine). The chain crosses the membrane as a helical span at residues 185–205 (LTIHIFLVFSFFLVFLIILFC). Residues 206-233 (NLVIIRTLLTQQVQIQRNAEVKRRALWM) are Cytoplasmic-facing. The helical transmembrane segment at 234 to 254 (VCTVLAVFIICFVPHHLVQLP) threads the bilayer. Residues 255–276 (WTLAELGFQDTDFHQAINDAHQ) lie on the Extracellular side of the membrane. Residues 277-296 (VTLCLLSTNCVLDPIIYCFL) traverse the membrane as a helical segment. The Cytoplasmic portion of the chain corresponds to 297–342 (TKKFRKHLTEKLYSMRESRKCSRATSETGTEVVMQLKDVPVKSLKY).

The protein belongs to the G-protein coupled receptor 1 family. As to quaternary structure, interacts with ARRB1. Found in oviductal epithelial and stroma cells. Levels in the oviduct are raised at days 2-4 of both pregnancy and of the estrus cycle. In the endometrium, localization is predominantly to the apical borders of glandular and luminal epithelial cells. Expressed at lower levels in endometrial stromal cells. Levels in the endometrium are increased at day 20 of pregnancy (at protein level).

The protein localises to the cell membrane. Receptor for platelet activating factor, a chemotactic phospholipid mediator that possesses potent inflammatory, smooth-muscle contractile and hypotensive activity. Seems to mediate its action via a G protein that activates a phosphatidylinositol-calcium second messenger system. May be involved in the morphological and physical modifications of the oviduct and uterus during the estrus cycle and early pregnancy. This chain is Platelet-activating factor receptor, found in Bos taurus (Bovine).